The following is an 83-amino-acid chain: Translational regulator CsrA (83 aa).

It belongs to the CsrA/RsmA family. In terms of assembly, homodimer; the beta-strands of each monomer intercalate to form a hydrophobic core, while the alpha-helices form wings that extend away from the core.

The protein resides in the cytoplasm. A translational regulator that binds mRNA to regulate translation initiation and/or mRNA stability. Usually binds in the 5'-UTR at or near the Shine-Dalgarno sequence preventing ribosome-binding, thus repressing translation. Its main target seems to be the major flagellin gene, while its function is anatagonized by FliW. This chain is Translational regulator CsrA, found in Thermotoga petrophila (strain ATCC BAA-488 / DSM 13995 / JCM 10881 / RKU-1).